The sequence spans 318 residues: Na(+)-translocating NADH-quinone reductase subunit C (318 aa).

The helical transmembrane segment at 13–33 threads the bilayer; that stretch reads WYIILFIFVLSLVAGTLLSSV. At threonine 281 the chain carries FMN phosphoryl threonine.

The protein belongs to the NqrC family. Composed of six subunits; NqrA, NqrB, NqrC, NqrD, NqrE and NqrF. Requires FMN as cofactor.

It localises to the cell inner membrane. The enzyme catalyses a ubiquinone + n Na(+)(in) + NADH + H(+) = a ubiquinol + n Na(+)(out) + NAD(+). Functionally, NQR complex catalyzes the reduction of ubiquinone-1 to ubiquinol by two successive reactions, coupled with the transport of Na(+) ions from the cytoplasm to the periplasm. NqrA to NqrE are probably involved in the second step, the conversion of ubisemiquinone to ubiquinol. This chain is Na(+)-translocating NADH-quinone reductase subunit C, found in Chlamydia muridarum (strain MoPn / Nigg).